The primary structure comprises 266 residues: Undecaprenyl-diphosphatase (266 aa).

Helical transmembrane passes span 1-21, 40-60, 90-110, 113-133, 145-165, 188-208, 217-237, and 245-265; these read MTLL…FLPV, LPLY…LVVL, LLVV…KPIF, LNQP…LWFT, LSWL…IPGI, FSFL…IDEV, PLLG…LWLF, and FKWF…KVAM.

The protein belongs to the UppP family.

Its subcellular location is the cell inner membrane. The catalysed reaction is di-trans,octa-cis-undecaprenyl diphosphate + H2O = di-trans,octa-cis-undecaprenyl phosphate + phosphate + H(+). Its function is as follows. Catalyzes the dephosphorylation of undecaprenyl diphosphate (UPP). Confers resistance to bacitracin. The polypeptide is Undecaprenyl-diphosphatase (Acaryochloris marina (strain MBIC 11017)).